Reading from the N-terminus, the 216-residue chain is UDP-N-acetylbacillosamine N-acetyltransferase (216 aa).

His137 acts as the Proton acceptor in catalysis. His146 contributes to the acetyl-CoA binding site.

Belongs to the transferase hexapeptide repeat family. Forms oligomers.

It catalyses the reaction UDP-N-acetylbacillosamine + acetyl-CoA = UDP-N,N'-diacetylbacillosamine + CoA + H(+). Its function is as follows. Catalyzes the conversion of UDP-2,4,6-trideoxy-2-acetamido-4-amino glucose to UDP-2,4,6-trideoxy-2,4-diacetamido glucose, commonly known as UDP-N,N'-diacetylbacillosamine (UDP-diNAcBac). This Bacillus subtilis (strain 168) protein is UDP-N-acetylbacillosamine N-acetyltransferase.